Here is a 476-residue protein sequence, read N- to C-terminus: Cardiolipin synthase (476 aa).

The next 2 membrane-spanning stretches (helical) occupy residues 2–22 (HLFI…IIFI) and 31–51 (WAWI…YILF). PLD phosphodiesterase domains are found at residues 207–234 (INYR…GDEY) and 389–416 (EKGF…DIRS). Active-site residues include H212, K214, D219, H394, K396, and D401.

It belongs to the phospholipase D family. Cardiolipin synthase subfamily.

It localises to the cell membrane. The catalysed reaction is 2 a 1,2-diacyl-sn-glycero-3-phospho-(1'-sn-glycerol) = a cardiolipin + glycerol. Catalyzes the reversible phosphatidyl group transfer from one phosphatidylglycerol molecule to another to form cardiolipin (CL) (diphosphatidylglycerol) and glycerol. The chain is Cardiolipin synthase (cls) from Clostridium perfringens (strain ATCC 13124 / DSM 756 / JCM 1290 / NCIMB 6125 / NCTC 8237 / Type A).